Reading from the N-terminus, the 132-residue chain is Glycine cleavage system H protein (132 aa).

Residues 24-107 (TATIGLSAFA…GEEGWLIKVR (84 aa)) enclose the Lipoyl-binding domain. The residue at position 65 (K65) is an N6-lipoyllysine.

This sequence belongs to the GcvH family. As to quaternary structure, the glycine cleavage system is composed of four proteins: P, T, L and H. (R)-lipoate is required as a cofactor.

Functionally, the glycine cleavage system catalyzes the degradation of glycine. The H protein shuttles the methylamine group of glycine from the P protein to the T protein. In Synechocystis sp. (strain ATCC 27184 / PCC 6803 / Kazusa), this protein is Glycine cleavage system H protein.